The sequence spans 718 residues: Phospholipid phosphatase-related protein type 3 (718 aa).

The next 3 membrane-spanning stretches (helical) occupy residues 18-38 (LPCFYFVELPIVASSIVSLYF), 70-90 (LIPLLMLLSLAFAAPAASIMV), and 133-153 (FVGVHVFGLCATALVTDVIQL). N-linked (GlcNAc...) asparagine glycosylation is present at Asn169. 3 helical membrane-spanning segments follow: residues 207–227 (HATLSAFAAVYVSMYFNSVIS), 233–253 (LKPILVFAFAIAAGVCGLTQI), and 263–283 (VYAGFLIGAGIAAYLACHAVG). Residues 313-347 (SVYQQNKSVSTDELGPPGRLEGAPRPVAREKTSLG) are disordered. Residues 314 to 323 (VYQQNKSVST) are compositionally biased toward polar residues. N-linked (GlcNAc...) asparagine glycosylation occurs at Asn318. Phosphoserine is present on residues Ser322 and Ser353. Residue Thr376 is modified to Phosphothreonine. A disordered region spans residues 416 to 488 (LEGRGLGLPD…GPRVILPPRA (73 aa)). Position 428 is a phosphoserine (Ser428). Acidic residues predominate over residues 439 to 462 (MAEEEEEEEDEEEEEEEEEEEDEG). Ser508 bears the Phosphoserine mark. Residues 545–571 (APGAPGPKAAETASSSSASSDSSQYRS) are compositionally biased toward low complexity. The segment at 545-577 (APGAPGPKAAETASSSSASSDSSQYRSPSDRDS) is disordered. Ser641 carries the phosphoserine modification. Positions 664–680 (GEGLPPLGAADGALGPG) are enriched in low complexity. Residues 664–702 (GEGLPPLGAADGALGPGSRESTLRRHAGGLGLAEREAEA) are disordered.

This sequence belongs to the PA-phosphatase related phosphoesterase family.

It is found in the membrane. This chain is Phospholipid phosphatase-related protein type 3, found in Homo sapiens (Human).